The primary structure comprises 232 residues: Cytidylate kinase (232 aa).

Residue 11-19 (GPAGAGKST) coordinates ATP.

This sequence belongs to the cytidylate kinase family. Type 1 subfamily.

The protein localises to the cytoplasm. It carries out the reaction CMP + ATP = CDP + ADP. The catalysed reaction is dCMP + ATP = dCDP + ADP. This is Cytidylate kinase from Roseiflexus castenholzii (strain DSM 13941 / HLO8).